The sequence spans 634 residues: Chaperone protein dnaK2 (634 aa).

At threonine 197 the chain carries Phosphothreonine; by autocatalysis. Residues 601–620 (SAEASANAQAGPSSSSSSSS) are compositionally biased toward low complexity. Positions 601-634 (SAEASANAQAGPSSSSSSSSGDDDVIDAEFSESK) are disordered. Acidic residues predominate over residues 621 to 634 (GDDDVIDAEFSESK).

The protein belongs to the heat shock protein 70 family.

In terms of biological role, acts as a chaperone. The protein is Chaperone protein dnaK2 (dnaK2) of Synechococcus elongatus (strain ATCC 33912 / PCC 7942 / FACHB-805) (Anacystis nidulans R2).